The chain runs to 143 residues: MAGFLMKQMVGNQLNEVTGGLGLKDDGGEKTETGEDPEVVAARLEQEERRKEKHRKMEQEREKMRQGIRDKYAIKKKEEGVAMDFTEGRIGGPRKTPEEIAAEMNAEDDSIIGQLGLTEQVEKAKTMATGAFETVKGFFPFGK.

The interval 15 to 71 is disordered; the sequence is NEVTGGLGLKDDGGEKTETGEDPEVVAARLEQEERRKEKHRKMEQEREKMRQGIRDK. Composition is skewed to basic and acidic residues over residues 23 to 33 and 44 to 71; these read LKDDGGEKTET and LEQEERRKEKHRKMEQEREKMRQGIRDK. Residues 40–71 adopt a coiled-coil conformation; that stretch reads VAARLEQEERRKEKHRKMEQEREKMRQGIRDK.

This sequence belongs to the complexin/synaphin family.

The protein resides in the cytoplasm. It is found in the cytosol. Its function is as follows. Positively regulates a late step in synaptic vesicle exocytosis. The chain is Putative complexin-1 (cpx-1) from Caenorhabditis briggsae.